The sequence spans 516 residues: Maturase K (516 aa).

The protein belongs to the intron maturase 2 family. MatK subfamily.

It is found in the plastid. The protein resides in the chloroplast. Functionally, usually encoded in the trnK tRNA gene intron. Probably assists in splicing its own and other chloroplast group II introns. This chain is Maturase K, found in Medeola virginiana (Indian cucumber root).